The chain runs to 367 residues: Polyenoic acids biosynthesis gene cluster protein Ba17b (367 aa).

3 helical membrane-spanning segments follow: residues 16–36 (LEVF…LRFY), 50–70 (WLII…IGAV), and 90–110 (LVAF…TEGL). Residue asparagine 133 is glycosylated (N-linked (GlcNAc...) asparagine). Helical transmembrane passes span 137–157 (LVLV…CTPF), 183–203 (FPNI…VWGL), and 211–231 (LVLV…GGDS). Asparagine 245 is a glycosylation site (N-linked (GlcNAc...) asparagine). Residues 259-279 (LIIWTVCEPGVYLIAACLLVY) traverse the membrane as a helical segment.

The protein belongs to the SAT4 family.

Its subcellular location is the membrane. Its pathway is secondary metabolite biosynthesis. Its function is as follows. Part of the gene cluster that mediates the biosynthesis of (2Z,4E,6E,10E)-9-hydroxydodeca-2,4,6,10-tetraenoic acid (BAA), (2E,4E,6E,10E)-9-hydroxydodeca-2,4,6,10-tetraenoic acid (BAB), and (2Z,4E,6E)-octa-2,4,6-trienedioic acid (PBA). The highly reducing polyketide synthase Ba17a is sufficent to produce PBA and BAA. The still to be characterized protein Ba17b leads to an increased production of BAA as well as to the production of the new compound BAB. BAA does not possess insecticidal activity against G.mellonella larvae, however, both BAA and BAB increase the growth of Candida albicans and BAA can mitigate the fungicidal effects of fluconazole over C.albicans, suggesting that generalist pathogens such as M.anisopliae, can potentially manipulate the yeast microbiota found in arthropods (and anywhere else) by the activity of compounds as BAA and BAB. This chain is Polyenoic acids biosynthesis gene cluster protein Ba17b, found in Metarhizium anisopliae (Entomophthora anisopliae).